A 547-amino-acid chain; its full sequence is MTSSPVTPSAVDDAPDWPAAFVRRYLDAGHWQDQSFAEALATSAARHPRRIALCDDDQRLSYADLLQRCRRLAAGLRQAGLAHGDTVVLHLPNGIAFVETCFALFQLGVRPVLALPAHRQHEISGFCRFAEAKAYIGAERIDGFDPRPMARELLASGACRMALIHGEAEAPLQALAPLYQADALEDCAARAEDIACFQLSGGTTGTPKLIPRRHREYLYNVRASAEVCGFDEHTVYLTGLPMAHNFTLCCPGVIGTLLASGRVVVSQRADPEHCFALIARERVTHTALVPPLAMLWLDAQESRRADLSSLRLLQVGGSRLGSSAAQRVEPVLGCQLQQVLGMAEGLICYTRLDDPPERVLHTQGRPLSPDDEVRVVDAEGREVGPGEVGELTVRGPYTIRGYYRLPEHNAKAFSADGFYRTGDRVSRDKDGYLVVEGRDKDQINRGGEKIAAEEVENLLIAHPQVHDATVVAMPDSLLGERTCAFVIPRQPAPSALKLKQYLHACGLAAFKVPDRIELVPAFPQTGIGKISKKDLRERLRRELEARA.

Belongs to the ATP-dependent AMP-binding enzyme family.

It catalyses the reaction salicylate + holo-[ACP] + ATP = salicyl-[ACP] + AMP + diphosphate. It participates in siderophore biosynthesis. It functions in the pathway antifungal biosynthesis. Functionally, involved in the biosynthesis of the siderophore pyochelin. Specifically adenylates salicylate and loads it onto the holo form of PchE via a thioester linkage to the phosphopanthetheine moiety. Is also involved in the synthesis of the antifungal antibiotic dihydroaeruginoic acid (Dha or hydroxyphenyl-thiazolinyl-carboxylate), a precursor of pyochelin. The polypeptide is Pyochelin synthase PchD (Pseudomonas aeruginosa (strain ATCC 15692 / DSM 22644 / CIP 104116 / JCM 14847 / LMG 12228 / 1C / PRS 101 / PAO1)).